The primary structure comprises 246 residues: 1-(5-phosphoribosyl)-5-[(5-phosphoribosylamino)methylideneamino] imidazole-4-carboxamide isomerase (246 aa).

Asp-8 functions as the Proton acceptor in the catalytic mechanism. The active-site Proton donor is the Asp-131.

It belongs to the HisA/HisF family.

It is found in the cytoplasm. It carries out the reaction 1-(5-phospho-beta-D-ribosyl)-5-[(5-phospho-beta-D-ribosylamino)methylideneamino]imidazole-4-carboxamide = 5-[(5-phospho-1-deoxy-D-ribulos-1-ylimino)methylamino]-1-(5-phospho-beta-D-ribosyl)imidazole-4-carboxamide. Its pathway is amino-acid biosynthesis; L-histidine biosynthesis; L-histidine from 5-phospho-alpha-D-ribose 1-diphosphate: step 4/9. This is 1-(5-phosphoribosyl)-5-[(5-phosphoribosylamino)methylideneamino] imidazole-4-carboxamide isomerase from Bordetella avium (strain 197N).